The sequence spans 288 residues: MDAAVTDDFQQILPIEQLRSTHASNDYVERPPAPCKQALSSPSLIVQTHKSDWSLATMPTSLPRSLSQCHQLQPLPQHLSQSSIASSMSHSTTASDQRLLASITPSPSGQSIIRTQPGAGVHPKADGALKGEAEQSAGHPSEHLFICEECGRCKCVPCTAARPLPSCWLCNQRCLCSAESLLDYGTCLCCVKGLFYHCSTDDEDNCADEPCSCGPSSCFVRWAAMSLISLFLPCLCCYLPTRGCLHLCQQGYDSLRRPGCRCKRHTNTVCRKISSGSAPFPKAQEKSV.

Residues 154 to 260 enclose the SPR domain; the sequence is KCVPCTAARP…GYDSLRRPGC (107 aa).

This sequence belongs to the sprouty family. Interacts with TESK1. Interacts with USP11. Interacts with CAV1 (via C-terminus). In terms of tissue distribution, widely expressed; particularly in the fetal tissues. Expressed in the brain with expression the highest in Purkinje cells in the cerebellum (at protein level). Expressed in the myocardium of the heart.

Its subcellular location is the cytoplasm. Inhibits neurite branching, arbor length and neurite complexity. Inhibits EGF-mediated p42/44 ERK signaling. Negatively regulates the MAPK cascade, resulting in a reduction of extracellular matrix protein accumulation. May function as an antagonist of fibroblast growth factor (FGF) pathways and may negatively modulate respiratory organogenesis. This Homo sapiens (Human) protein is Protein sprouty homolog 3.